The chain runs to 579 residues: Adenine/guanine permease AZG1 (579 aa).

The next 12 membrane-spanning stretches (helical) occupy residues 52–72 (AGTA…SILS), 131–151 (LIVA…LMAN), 183–203 (TALA…AIGF), 221–241 (AGIG…IGLV), 260–280 (ISLA…AGGS), 292–312 (MESP…YCLV), 320–340 (IYGI…VTAF), 379–399 (FWEA…GTLY), 414–434 (FAGQ…GSLL), 459–479 (AITV…LASI), 480–500 (PAWA…KSVT), and 514–534 (FVTM…IGGI).

It belongs to the nucleobase:cation symporter-2 (NCS2) (TC 2.A.40) family. Azg-like subfamily.

It localises to the membrane. Functionally, transports natural purines (adenine and guanine) as well as purine analogs. Confers sensitivity to 8-azaadenine and 8-azaguanine (8-azg). This chain is Adenine/guanine permease AZG1 (AZG1), found in Arabidopsis thaliana (Mouse-ear cress).